The sequence spans 559 residues: Frizzled-5 (559 aa).

Positions 1–26 are cleaved as a signal peptide; that stretch reads MGSFRSGVFALSFVVLLLDYFAPAQA. Residues 27 to 220 are Extracellular-facing; the sequence is ASKAIVCQEI…QPYFTQDEKM (194 aa). An FZ domain is found at 28-149; sequence SKAIVCQEIT…GDPDTLCMYY (122 aa). 5 disulfides stabilise this stretch: C33-C94, C41-C87, C78-C116, C105-C146, and C109-C133. N-linked (GlcNAc...) asparagine glycosylation is present at N47. N-linked (GlcNAc...) asparagine glycosylation occurs at N150. A helical transmembrane segment spans residues 221–241; the sequence is FVTFWIGLWSILCFISTFTTV. Topologically, residues 242 to 257 are cytoplasmic; sequence ATFLIDMERFRYPERP. Residues 258–278 form a helical membrane-spanning segment; that stretch reads IIFLSACYLFVSIGYVVRLIV. The Extracellular segment spans residues 279-301; sequence GHENVACNKDHIHYETTGPALCT. The helical transmembrane segment at 302 to 322 threads the bilayer; it reads IVFLLIYFFGMASSIWWVILT. The Cytoplasmic portion of the chain corresponds to 323–343; sequence FTWFLAAGMKWGNEAIASYSQ. Residues 344-364 traverse the membrane as a helical segment; sequence YFHMAAWLIPSVKSIAVLALS. At 365 to 387 the chain is on the extracellular side; it reads SVDGDPVAGICYVGNQNLDNLRG. A helical membrane pass occupies residues 388-408; that stretch reads FVLAPLVVYLFSGTMFLLAGF. Over 409–434 the chain is Cytoplasmic; that stretch reads VSLFRIRSVIKQGGTKTDKLEKLMIR. The helical transmembrane segment at 435–455 threads the bilayer; the sequence is IGIFSVLYTVPATIVVACYIY. The Extracellular portion of the chain corresponds to 456–483; sequence EQHYREHWEKTHNCSCPGDKQRYRPDYA. An N-linked (GlcNAc...) asparagine glycan is attached at N468. The helical transmembrane segment at 484 to 504 threads the bilayer; it reads VFMLKYLMCLVVGITSGVWIW. Over 505–559 the chain is Cytoplasmic; the sequence is SGKTLESWKRFTGRCCRNSKPINASAYSEASRALTPRTGLSNLTLPHKQVPLSHV. The short motif at 507-512 is the Lys-Thr-X-X-X-Trp motif, mediates interaction with the PDZ domain of Dvl family members element; the sequence is KTLESW. Residues 557–559 carry the PDZ-binding motif; sequence SHV.

This sequence belongs to the G-protein coupled receptor Fz/Smo family. In terms of tissue distribution, expressed in retina.

Its subcellular location is the cell membrane. It is found in the golgi apparatus membrane. Functionally, receptor for Wnt proteins that functions in the canonical Wnt/beta-catenin signaling pathway. The canonical Wnt/beta-catenin signaling pathway leads to the activation of disheveled proteins, inhibition of GSK-3 kinase, nuclear accumulation of beta-catenin and activation of Wnt target genes. A second signaling pathway involving PKC and calcium fluxes has been seen for some family members, but it is not yet clear if it represents a distinct pathway or if it can be integrated in the canonical pathway, as PKC seems to be required for Wnt-mediated inactivation of GSK-3 kinase. Both pathways seem to involve interactions with G-proteins. May be involved in transduction and intercellular transmission of polarity information during tissue morphogenesis and/or in differentiated tissues. The protein is Frizzled-5 (fzd5) of Xenopus laevis (African clawed frog).